We begin with the raw amino-acid sequence, 248 residues long: Biosynthetic peptidoglycan transglycosylase (248 aa).

The helical transmembrane segment at 20-42 (WLRWLMAAPLLFAAASVLQVLIL) threads the bilayer.

It belongs to the glycosyltransferase 51 family.

It localises to the cell inner membrane. It catalyses the reaction [GlcNAc-(1-&gt;4)-Mur2Ac(oyl-L-Ala-gamma-D-Glu-L-Lys-D-Ala-D-Ala)](n)-di-trans,octa-cis-undecaprenyl diphosphate + beta-D-GlcNAc-(1-&gt;4)-Mur2Ac(oyl-L-Ala-gamma-D-Glu-L-Lys-D-Ala-D-Ala)-di-trans,octa-cis-undecaprenyl diphosphate = [GlcNAc-(1-&gt;4)-Mur2Ac(oyl-L-Ala-gamma-D-Glu-L-Lys-D-Ala-D-Ala)](n+1)-di-trans,octa-cis-undecaprenyl diphosphate + di-trans,octa-cis-undecaprenyl diphosphate + H(+). It functions in the pathway cell wall biogenesis; peptidoglycan biosynthesis. In terms of biological role, peptidoglycan polymerase that catalyzes glycan chain elongation from lipid-linked precursors. This chain is Biosynthetic peptidoglycan transglycosylase, found in Xanthomonas euvesicatoria pv. vesicatoria (strain 85-10) (Xanthomonas campestris pv. vesicatoria).